Reading from the N-terminus, the 164-residue chain is Ubiquitin-conjugating enzyme E2 2 (164 aa).

One can recognise a UBC core domain in the interval Pro-4–Glu-150. Catalysis depends on Cys-88, which acts as the Glycyl thioester intermediate.

This sequence belongs to the ubiquitin-conjugating enzyme family.

The protein localises to the cytoplasm. The protein resides in the nucleus. The enzyme catalyses S-ubiquitinyl-[E1 ubiquitin-activating enzyme]-L-cysteine + [E2 ubiquitin-conjugating enzyme]-L-cysteine = [E1 ubiquitin-activating enzyme]-L-cysteine + S-ubiquitinyl-[E2 ubiquitin-conjugating enzyme]-L-cysteine.. It participates in protein modification; protein ubiquitination. In terms of biological role, catalyzes the covalent attachment of ubiquitin to other proteins. Plays a role in transcription regulation by catalyzing the monoubiquitination of histone H2B to form H2BK123ub1. H2BK123ub1 gives a specific tag for epigenetic transcriptional activation and is also a prerequisite for H3K4me and H3K79me formation. Also involved in postreplication repair of UV-damaged DNA, in N-end rule-dependent protein degradation and in sporulation. The sequence is that of Ubiquitin-conjugating enzyme E2 2 (UBC2) from Kluyveromyces lactis (strain ATCC 8585 / CBS 2359 / DSM 70799 / NBRC 1267 / NRRL Y-1140 / WM37) (Yeast).